A 431-amino-acid chain; its full sequence is O-phosphoseryl-tRNA(Sec) selenium transferase (431 aa).

The segment at 1–36 (MRGLIPDHMLERGRTVLDSYREPVERLLSERRMPEE) is tetramerization. Arg67 is a pyridoxal 5'-phosphate binding site. The phosphate loop (P-loop) stretch occupies residues 88–98 (GRSGTLVDPQP). Substrate contacts are provided by Arg89, Ser90, and Gln97. Lys269 is modified (N6-(pyridoxal phosphate)lysine). Arg298 is a substrate binding site.

The protein belongs to the SepSecS family. As to quaternary structure, homotetramer. Pyridoxal 5'-phosphate serves as cofactor.

The enzyme catalyses O-phospho-L-seryl-tRNA(Sec) + selenophosphate + H2O = L-selenocysteinyl-tRNA(Sec) + 2 phosphate. The protein operates within aminoacyl-tRNA biosynthesis; selenocysteinyl-tRNA(Sec) biosynthesis; selenocysteinyl-tRNA(Sec) from L-seryl-tRNA(Sec) (archaeal/eukaryal route): step 2/2. Its function is as follows. Converts O-phosphoseryl-tRNA(Sec) to selenocysteinyl-tRNA(Sec) required for selenoprotein biosynthesis. This Methanopyrus kandleri (strain AV19 / DSM 6324 / JCM 9639 / NBRC 100938) protein is O-phosphoseryl-tRNA(Sec) selenium transferase (spcS).